Here is a 244-residue protein sequence, read N- to C-terminus: 1-(5-phosphoribosyl)-5-[(5-phosphoribosylamino)methylideneamino] imidazole-4-carboxamide isomerase (244 aa).

The active-site Proton acceptor is aspartate 9. Aspartate 131 acts as the Proton donor in catalysis.

The protein belongs to the HisA/HisF family.

The protein resides in the cytoplasm. It carries out the reaction 1-(5-phospho-beta-D-ribosyl)-5-[(5-phospho-beta-D-ribosylamino)methylideneamino]imidazole-4-carboxamide = 5-[(5-phospho-1-deoxy-D-ribulos-1-ylimino)methylamino]-1-(5-phospho-beta-D-ribosyl)imidazole-4-carboxamide. It functions in the pathway amino-acid biosynthesis; L-histidine biosynthesis; L-histidine from 5-phospho-alpha-D-ribose 1-diphosphate: step 4/9. The polypeptide is 1-(5-phosphoribosyl)-5-[(5-phosphoribosylamino)methylideneamino] imidazole-4-carboxamide isomerase (Campylobacter jejuni subsp. doylei (strain ATCC BAA-1458 / RM4099 / 269.97)).